Consider the following 186-residue polypeptide: MHKLVLASGSPRRKELLAQLGYTFDVVLPDIEECKAEQETAAEYVLRLSQQKAQAGLALVSESSIVVGSDTVVVCDGQVLEKPHHFADAQRMLTQLSDRRHQVMTAVTVVSAEKQHSIVVTTEVWFKKLTQEEIEQYWQSGEPCDKAGSYGIQGLGGRFVTRIEGSYSAVVGLPLYETDQLLHEFI.

Aspartate 70 (proton acceptor) is an active-site residue.

The protein belongs to the Maf family. YhdE subfamily. Requires a divalent metal cation as cofactor.

It is found in the cytoplasm. The enzyme catalyses dTTP + H2O = dTMP + diphosphate + H(+). It catalyses the reaction UTP + H2O = UMP + diphosphate + H(+). In terms of biological role, nucleoside triphosphate pyrophosphatase that hydrolyzes dTTP and UTP. May have a dual role in cell division arrest and in preventing the incorporation of modified nucleotides into cellular nucleic acids. The polypeptide is dTTP/UTP pyrophosphatase (Vibrio vulnificus (strain CMCP6)).